Consider the following 543-residue polypeptide: Chaperonin GroEL (543 aa).

Residues 29–32 (TLGP), 86–90 (DGTTT), glycine 413, 477–479 (DAL), and aspartate 493 each bind ATP.

This sequence belongs to the chaperonin (HSP60) family. Forms a cylinder of 14 subunits composed of two heptameric rings stacked back-to-back. Interacts with the co-chaperonin GroES.

It localises to the cytoplasm. The enzyme catalyses ATP + H2O + a folded polypeptide = ADP + phosphate + an unfolded polypeptide.. Functionally, together with its co-chaperonin GroES, plays an essential role in assisting protein folding. The GroEL-GroES system forms a nano-cage that allows encapsulation of the non-native substrate proteins and provides a physical environment optimized to promote and accelerate protein folding. The sequence is that of Chaperonin GroEL from Clostridium novyi (strain NT).